We begin with the raw amino-acid sequence, 208 residues long: 3-isopropylmalate dehydratase small subunit 2 (208 aa).

It belongs to the LeuD family. LeuD type 1 subfamily. Heterodimer of LeuC and LeuD.

It carries out the reaction (2R,3S)-3-isopropylmalate = (2S)-2-isopropylmalate. The protein operates within amino-acid biosynthesis; L-leucine biosynthesis; L-leucine from 3-methyl-2-oxobutanoate: step 2/4. In terms of biological role, catalyzes the isomerization between 2-isopropylmalate and 3-isopropylmalate, via the formation of 2-isopropylmaleate. The polypeptide is 3-isopropylmalate dehydratase small subunit 2 (leuD2) (Salmonella typhimurium (strain LT2 / SGSC1412 / ATCC 700720)).